Consider the following 331-residue polypeptide: D-alanine--D-alanine ligase (331 aa).

Positions 116–316 (KRQWQTHGLP…YEDFVLQLAA (201 aa)) constitute an ATP-grasp domain. 142-197 (ADRLGLPLIVKPAREGSSIGLTKVTSVAELPAAYEKAARLDRDVMAEQFIEGDELT) is a binding site for ATP. Positions 269, 283, and 285 each coordinate Mg(2+).

Belongs to the D-alanine--D-alanine ligase family. Requires Mg(2+) as cofactor. It depends on Mn(2+) as a cofactor.

It is found in the cytoplasm. It catalyses the reaction 2 D-alanine + ATP = D-alanyl-D-alanine + ADP + phosphate + H(+). Its pathway is cell wall biogenesis; peptidoglycan biosynthesis. Its function is as follows. Cell wall formation. The protein is D-alanine--D-alanine ligase of Ralstonia pickettii (strain 12J).